The primary structure comprises 336 residues: Isopentenyl-diphosphate delta-isomerase (336 aa).

Residue 5–6 coordinates substrate; it reads RK. FMN is bound by residues 60 to 62, serine 90, and asparagine 117; that span reads AMT. Glutamine 147 contributes to the substrate binding site. Mg(2+) is bound at residue glutamate 148. FMN contacts are provided by residues lysine 179, serine 204, threonine 209, 253–255, and 274–275; these read GVR and SR.

This sequence belongs to the IPP isomerase type 2 family. In terms of assembly, homooctamer. Dimer of tetramers. FMN serves as cofactor. The cofactor is NADPH. Requires Mg(2+) as cofactor.

It is found in the cytoplasm. The catalysed reaction is isopentenyl diphosphate = dimethylallyl diphosphate. In terms of biological role, involved in the biosynthesis of isoprenoids. Catalyzes the 1,3-allylic rearrangement of the homoallylic substrate isopentenyl (IPP) to its allylic isomer, dimethylallyl diphosphate (DMAPP). In Streptococcus pneumoniae serotype 4 (strain ATCC BAA-334 / TIGR4), this protein is Isopentenyl-diphosphate delta-isomerase.